Reading from the N-terminus, the 379-residue chain is 2-methylcitrate synthase (379 aa).

H187 contacts substrate. The active site involves H222. 264-268 serves as a coordination point for CoA; the sequence is KVMGF. Residue H270 is part of the active site. R279 contacts substrate. D321 is a catalytic residue. Positions 346 and 365 each coordinate substrate.

This sequence belongs to the citrate synthase family. Homodimer.

It catalyses the reaction propanoyl-CoA + oxaloacetate + H2O = (2S,3S)-2-methylcitrate + CoA + H(+). The catalysed reaction is oxaloacetate + acetyl-CoA + H2O = citrate + CoA + H(+). The protein operates within organic acid metabolism; propanoate degradation. It functions in the pathway carbohydrate metabolism; tricarboxylic acid cycle; isocitrate from oxaloacetate: step 1/2. Functionally, involved in the catabolism of short chain fatty acids (SCFA) via the tricarboxylic acid (TCA)(acetyl degradation route) and via the 2-methylcitrate cycle I (propionate degradation route). Catalyzes the Claisen condensation of propionyl-CoA and oxaloacetate (OAA) to yield 2-methylcitrate (2-MC) and CoA. Also catalyzes the condensation of oxaloacetate with acetyl-CoA but with a lower specificity. This chain is 2-methylcitrate synthase (gltA), found in Antarctic bacterium DS2-3R.